A 566-amino-acid chain; its full sequence is 4-hydroxy-7-methoxy-3-oxo-3,4-dihydro-2H-1,4-benzoxazin-2-yl glucoside beta-D-glucosidase 1, chloroplastic (566 aa).

The N-terminal 54 residues, Met-1 to Arg-54, are a transit peptide targeting the chloroplast. Residues Gly-17–Cys-47 form a disordered region. A beta-D-glucoside is bound by residues Gln-92, His-196, and Asn-244 to Glu-245. The active-site Proton donor is the Glu-245. A disulfide bond links Cys-264 and Cys-270. The segment at Ser-325–Arg-361 is dimerization. Position 387 (Tyr-387) interacts with a beta-D-glucoside. 2 dimerization regions span residues Asn-394–Leu-405 and Lys-450–Asn-453. Residues Glu-460, Trp-511, Glu-518–Trp-519, and Tyr-527 contribute to the a beta-D-glucoside site. The active-site Nucleophile is the Glu-460.

Belongs to the glycosyl hydrolase 1 family. Homo- and heterodimer. In terms of tissue distribution, expressed in all seedling parts. Most abundant in the coleoptile.

It is found in the plastid. It localises to the chloroplast. It catalyses the reaction Hydrolysis of terminal, non-reducing beta-D-glucosyl residues with release of beta-D-glucose.. The enzyme catalyses DIMBOA beta-D-glucoside + H2O = DIMBOA + D-glucose. The catalysed reaction is DIBOA beta-D-glucoside + H2O = DIBOA + D-glucose. Reversibly inhibited by micromolar concentrations of Hg(2+) or Ag(+), but irreversibly inhibited by alkylation in presence of urea. Competitive inhibition by p-nitrophenyl beta-D-thioglucoside (pNPTGlc), glucotetrazole, and para-hydroxy-S-mandelonitrile beta-glucoside (dhurrin). Its function is as follows. Is implicated in many functions such as ABA metabolism, hydrolysis of conjugated gibberellins, conversion of storage forms of cytokinins to active forms. Also acts in defense of young plant parts against pests via the production of hydroxamic acids from hydroxamic acid glucosides. Enzymatic activity is highly correlated with plant growth. The preferred substrate is DIMBOA-beta-D-glucoside. Hydrolyzes the chromogenic substrate 6-bromo-2-naphthyl-beta-D-glucoside (6BNGlc) and various artificial aryl beta-glucosides. No activity with cellobiose, arbutin, gentiobiose, linamarin or dhurrin as substrates. This is 4-hydroxy-7-methoxy-3-oxo-3,4-dihydro-2H-1,4-benzoxazin-2-yl glucoside beta-D-glucosidase 1, chloroplastic (GLU1) from Zea mays (Maize).